The following is a 488-amino-acid chain: Serine/threonine-protein kinase haspin homolog hrk1 (488 aa).

The region spanning 156–488 (TFEIQKIGEA…SLLNWVRQKY (333 aa)) is the Protein kinase domain. Residues 162–170 (IGEASYSEV) and lysine 184 each bind ATP. The active-site Proton acceptor is aspartate 305.

The protein belongs to the protein kinase superfamily. Ser/Thr protein kinase family. Haspin subfamily. As to quaternary structure, interacts with pds5 and swi6.

The protein localises to the cytoplasm. It is found in the chromosome. It catalyses the reaction L-seryl-[protein] + ATP = O-phospho-L-seryl-[protein] + ADP + H(+). It carries out the reaction L-threonyl-[protein] + ATP = O-phospho-L-threonyl-[protein] + ADP + H(+). In terms of biological role, serine/threonine haspin-like protein kinase involved in cell cycle regulation. Acts in chromosomal passenger complex (CPC) targeting to centromeres by phosphorylating histone H3 at 'Thr3' (H3T3ph). The protein is Serine/threonine-protein kinase haspin homolog hrk1 (hrk1) of Schizosaccharomyces pombe (strain 972 / ATCC 24843) (Fission yeast).